Reading from the N-terminus, the 119-residue chain is Ribonuclease P protein component (119 aa).

Belongs to the RnpA family. Consists of a catalytic RNA component (M1 or rnpB) and a protein subunit.

The enzyme catalyses Endonucleolytic cleavage of RNA, removing 5'-extranucleotides from tRNA precursor.. Its function is as follows. RNaseP catalyzes the removal of the 5'-leader sequence from pre-tRNA to produce the mature 5'-terminus. It can also cleave other RNA substrates such as 4.5S RNA. The protein component plays an auxiliary but essential role in vivo by binding to the 5'-leader sequence and broadening the substrate specificity of the ribozyme. This is Ribonuclease P protein component from Serratia proteamaculans (strain 568).